The chain runs to 5088 residues: MTYHDYALKDNAVLERDHKLALDNLVTNVIQYWTPILTMLLLAIYILKKIMQNPFVGPVSDNPLKRALQWIIFVFTRRNLYYQTPVFTRDESRLNVFLHNDFARLDRNTLNGYCKICNLYGHNHTEKHNPTIDALVLAKTCKLLRYNDKVTKPLAYTVHNIRAYEKNTKTFADTFGTTTTNIPTKYALAPKKAVADLTTIESNLGPIYVNNTIAYPHLGFIAYNNKQHLQELLANVTVVLDTVMVYTQYELDDATINIRKSNIKLHFVNDFDLTNALTNELKDPRTPWLLKAKKSSNKALEIEDDTEAEETQKTKRKGKLQPQTQLLQHTLAKQSKPARRQSHLTFGPAYMTMLCLISIMSPTQAKVCTTYEILDQADLYCNNLQNLTIAKYHAYANYEHMNKQCFSTDGAEFKDLVRLSVSNALNLNNVIKPLPKDDYILKAFSNALPLNTHVLSDYTTILDLQILMQFYNLNGSNVLYTENYSESEDYTGKVIQLLAQGTGGICKAPACIKFTGLDPTATDVEVKITERLTKRIKHQEHGKSLIIDPSCRKTCYCMRKPEIKPEPVEPVKYAPPAEFYTQLRYFQNHELRMYDDFEMGVLRYNNYTLSTFIYSNDTCIQTRGVHCVYNSEHFVITRVYNNLGNYLECGVNQEFCESLQQEFMFNEPQLVITESSTAEVSAQYKKICANHYTTLQSKYPLIEKLFWSNFNVSVNRALAAKEPATFLIVYDTPAIVKTIIADIIETMEECYGNTAIKLTSNDFNKLDDYNDFLIEHKPLLAKHKIMLIEDIDLIKVSMARAIYTIFDTYNPLVYGVFVLGTLNHKRYNETLAFNYYNGQTPTSYVEGILTNNWRELEDHTRQPLIIRVTDNVHTILARQLVTPPAKLAETMSKIPPLNNTSKVINTLTHYSAHILRTVENDSTQAYTYINKSVHNITDYVNGTVHNFTDYVYTAYNTTKNHIVTRYNNMLMAVYDIQLNFYNRYPLRQDFYHKGMRAFDLGRVCDFLHHSDTIVLYQDCINQKLDTIHVIKLRYGQNANAYHMYPLELPHTKQTIYELSDAIGFVYKDRKYNYFRTLFTNPGEYVLTIRENYLEYCKSDNSPTPAFAPDVPLQCFAYITGVQVVDSFIAEFGLFLMLYIAALIIILAIAITIRDNTMMMFLKLITIFAYTFGHLLLTPRVYGSYMFLSIYNILPYTSNTSYGCLLMLGALAIAVIDLLAYITQRYRSEFTKNVLQLVTLFFEIAAVTKYILIPYIFTSYGLVLTIIVSYVAYRYIHSRRPNYLKATVSNATAHADWVAYRNTTREKTDEAAKSNLSKIINTSVAEIQKDQLLECLYLAACHRATVASSTYNPKHYLHIPNYNTKIMFARDNELMNYSVLSTDFKNKSAASNPSISHIVLEMPVAINPLIKYTTRTSVSSLRGAVVNGYIYIQRHLFGSKKQEFEACYNNGKGLLNCKNLERSKYDIDSAELIGTLIRIPLHDKHSIPHISIHPDPLSYNGPVTLYLSRYDTELNKDVLCVHTGFMSEGHHDIKTVFGDCGGMLFDPKGRLLGLHCAGSDDVVFMDTTTGKSNIWTSYKLQHPSEIMITLNNEINLPNPANYDFETTKVVYQHPLRNVCATLETLQHLTNKTNAKLPYDSRLLSDFNITAEQYNQYGYYIDYNNFVNNFNRYTTTTIGTKSFETCIKYGLMDNKKPDYYNQSATIFNSPEHSSSGFDNTMDVLYVFVYMFTHTHPAFYIAAACVFGLFFVKMNRHLKMILSSIIFAIPHIYVNYYYGLVYMPLKWRKQITALAIRYNPYTAVAIRYNKNLNIAKDVAKELGTPKNLCTHLSTLLKCIKPYAAFNDLSQVINNVDDLMANWANTYNPEKLLKQYIEEIYKLYPILFIVFERIESYEDQIKTILSFISDTGEFDLNGFEIHFDEKEHTTNIIDTNVEDIREKLMAAKASLIALKNMNSEFDIETINSANIGELVRYLIISSTPETLDRDLLARTTELLVRHIHQLRDDSEHNENLITLLSEIYKHKDFLTASHLTSNLRDRNYVMNNLVRVIALFNKQINMQVAQKQYEARRIEDVRKKESKQIMEQNNRIRKMQRQNQNIASAIVHMVHACFANRFMLQNEAQKIMKALLGTNLELDPSDAEMQYYTAYRTGQVLTNQAIVTNFTTLTTILWTGNGYQTVPSMCGLHEFTCTATHKHGYFNCTMEIKDAWYKHAEECTKCKSYYRANKHPRCGAIYDTTVKRIPTLSNFIARYRSCPSCMPCTQCLSHREPGCESASYHIADTAHYQNQAYLTPINIKPDNLEYNFVDVNNGDVNAIYNGRIWLMRRTTAITPPPARYRNITNLKLKQTDPEGYYYISEVCPTDLAILNAMINQIQLKLLDRTVLNNENHVENDNTIKFNTPLNDTTLDDLRTKHKHLLVMKLKPDSEHHFIEVLDFVRMNNLPIFIAHVTYAENDVNHATIYVNYLQAWRNEILDDVTKTCDILEKIIKHPLDFQSGLVLLSRNSNVARYHQLCTNTNNGIRHTIDISCNKTSISYIDEVNNNVNVKIKQHIVKEYKIYEMLINQYPNLFLIEHKLVNFTIPHLLRYNMTALSFADLYGLIKEENWHPIYDTLPQVTYHKINDDLLLKIKSHTPSPQHTCCMLCRRFLVEFGLLLHKLNYKVFETTRAILTHYDFVLTADNVDLNGILDFEDYKLKKSTIAHDVKSQLRIMQPYYHALYSFYEHTGMYFISQPIYNSIVDPSLDLIQQFELAVEAIRNLPLDVKFDDTPLYRPTIQHLTEYLKLNIYAMEPEPLWNCYDTMNCPQIELPEIDNAITSIITKPTRPLSEYIELNHTTVKNLDGDVYCKIHHNEINNLQDILYSKPTDVTIHELYIVDHPYELESHNRMLRTSLNIWLHNLYDANVNLSHFDSINYDKTRKASFPIVGTVPAIPLRDCEVCQDEIPDDLKDVYDFGSCVHARAQLSDYTTPRKLNPLIEFDPALLRHGEFLPNNDYAYTMKTKPDHLIDCELKDYIDSTGLTALIPPLDINPAVHDPETTYSSSYYIKTPSETSIRQDLELFNQNTAGSVSPTVFLMAIELLHQLLTEEISASDGKPNCPMVPSEVPVRNKHKSAGTPYRKFGDSEFMRELYGNYRDAIVYHKRHSADQQLTLTINKVAPSKNHRDRTILAISINKSEPGRSLYRWNLDKIKYTSSLGGPILIGFTAQYGGWDKLYKYLYKNSPADHPDIAEHAVLGGKDYPKWDRRISNMLQLTTTTVLYSLIDPNTQSKLNNATPAQTWHEYMAETTQVLFDYLVFGNELYQKPGGVTSGNSRTADGNSLLHLLIDFYAIISQLIQSTPENVHLEVNLRNALCKTVFTKIPSDYIDSSCVTLRNTDILHTIRRRVAKGAYLSDDGLIVIDPRIIRYDDFMSVSHLISHYMIAQNKHKYHIDAIQRYAREFLSQDTIKFGDMVYPIPEFGRMYTAMLLSDNKNTLDPQINITRLLALFSYLYIYYFKYVDQPTHPILKFLDALRTYIELKLNTTDEIFLDCIKVPDLQDVEFDLKNCDLYENFDYLWGLDQSSAYMDYLCKYKHRYRNLSLFKRQLIQHHEEAQLHNENKLKNKGRLITYNCYVCGENAYLTCATCERAFCNSADTNHGSHMEQHLQYSGHTCLYLNCKTVKCHHCFTTDINLLYTTGRDHYCEAHKPKNAVRILNHNDNTKLPPLLYLCVTDTKRVTFYEQCYINYTKAHPTYAISKEQFMGLIQLYLHQDYTLPVNQLANRIRVSLQLSSYGVVRPYHQLIMQLTKLESKVLDSSVVDIPITLINSQEIGTYYIEIPREHKLDQHSTYSYLMGTREVSFTPNYHRLSSTNTHIWLTDTQIPNYCTFIRQRRLNTLSAILRNTTQHVPEYTRLLLEWNQQLPITAKPFAEFKPSLKIPAQPNVTDNINMLLKELNEKRFKIMFGGPGTGKSHTLSILINHLHEKGLRILVYTPSHQSANALLYKIANLIKRRTIQNPGLVRIITDGMKEEIKPHPYITYRTNMLDKDRICVTTIQSFSTVQHVKDIDLVILDEFSLTSDNYLLTGLAHLKPSTRVLFSGDPRQLSGVDEVRKPLQSRFHTLINYYTETYPREVHVLKYHFRCHPTIFQYFKDLYYADKDMECATSIADRIIRPLNPINTVQVSEPTFRNQGVILNQDEADKVLEILVLVNQTLALHSSYEYQPTIAIICSYKSQLQNFISLQQQKILSDNVNLSTIDSAQGDEFDIVILCLSQINNFTLNPNRFNVAISRAKSVLFITVPPIDKNPAFLFKDVYETLHKHNLTYFKIYNTSGKAILSLDSPTTLKTQAEKMPYTNVRNLDKETHTMQRKFPMNIVMDDCICFDAEFLNPRDNLQEPVMLSYGFSSKYGKRRIAGIPVRYIKDKFNRIIPHKYNYKDNNKPLTSTYSCDWMKKQHPDQYKHLLTSVLQGIRNDTTVDLRPLLNFCVDNMHVKPVIVTWSGASDHCFLRAHTLYPDISTVCNITTRCTSQPIYASPQGRHTYYLCQYHAHQLKDHINITHFVNLEIIDLKVDRNQYTNERTLRVYHNDYLKLTLDLDNVASNSLTDCHTRYCRTIHAPPTPHDPLDDAIMTQCIYQSFVLSHLEKLAYEPQANLKAFTSMDYRLKNFNPEMCKLRRELQKVWYEKYIDTKKTHCNMGCGKEPLQQALHNIDVLQGKSNPQNNMNTHTCDSEEHIYFDSHWYKDGGFKKPSYIFSDINKEHYYKLGTTGLCLYLNSKYAKYVHEYRTVSGNDVFKSLYSPYCDLGRKPHQAVIEPSCSIPDCIITSNIGERFQTLVCNVHQDQMELISKIAQATKYGYQFIYTGKILLNNHAALAKAPLDWDHLTLEIPGYNTRKQHSSHMTTKALGILHILQDSMLYTNRKTLNPNLPVILPGSASYLGDTVLANEMSKTLKQTKFVHIDPRLKIDNNTTHHRKTLMEMLDIGYTTELIISDIHDNNNPWIPELMEYTLKYLIDTGTLIMKITSRGATEAVLQQLEHMAKNFTYVRVCNLNAVTFSSELWIVFANKRKPPVQGWTSHELRAELRKHWYSMTRSIIQPLMRARQSVFRYSPK.

Residues 26 to 46 (VTNVIQYWTPILTMLLLAIYI) form a helical membrane-spanning segment. The interval 301-323 (EIEDDTEAEETQKTKRKGKLQPQ) is disordered. 5 helical membrane-spanning segments follow: residues 343–363 (HLTF…MSPT), 1132–1152 (GLFL…AITI), 1156–1176 (TMMM…HLLL), 1201–1221 (YGCL…LAYI), and 1250–1270 (ILIP…VSYV). Active-site for 3C-like proteinase residues include H1434 and C1539. The next 2 membrane-spanning stretches (helical) occupy residues 1729 to 1749 (FTHT…LFFV) and 1758 to 1778 (ILSS…YGLV). Residues 3093 to 3112 (KPNCPMVPSEVPVRNKHKSA) are disordered. In terms of domain architecture, ExoN spans 4351 to 4616 (MNIVMDDCIC…MTQCIYQSFV (266 aa)). Residues D4362, E4364, and D4481 contribute to the active site. Zn(2+) is bound by residues C4498, C4504, C4522, and H4525. Residues H4599, D4604, K4880, D4969, K4998, and E5035 contribute to the active site. In terms of domain architecture, Nidovirus-type SAM-dependent 2'-O-MTase spans 4844 to 5088 (LNNHAALAKA…RQSVFRYSPK (245 aa)).

As to quaternary structure, homodimer. In terms of processing, specific enzymatic cleavages in vivo by its own protease yield mature proteins. 3CL-PRO is autocatalytically processed.

It is found in the membrane. It carries out the reaction a 5'-end (5'-triphosphoguanosine)-ribonucleoside in mRNA + S-adenosyl-L-methionine = a 5'-end (N(7)-methyl 5'-triphosphoguanosine)-ribonucleoside in mRNA + S-adenosyl-L-homocysteine. The enzyme catalyses RNA(n) + a ribonucleoside 5'-triphosphate = RNA(n+1) + diphosphate. It catalyses the reaction ATP + H2O = ADP + phosphate + H(+). The catalysed reaction is a 5'-end (N(7)-methyl 5'-triphosphoguanosine)-ribonucleoside in mRNA + S-adenosyl-L-methionine = a 5'-end (N(7)-methyl 5'-triphosphoguanosine)-(2'-O-methyl-ribonucleoside) in mRNA + S-adenosyl-L-homocysteine + H(+). Its function is as follows. Cysteine protease responsible for the majority of cleavages of the polyprotein. Recognizes substrates containing the core sequence [NT]-[EHKQSY]-|-[AGNST]. In terms of biological role, the helicase which contains a zinc finger structure displays RNA and DNA duplex-unwinding activities with 5' to 3' polarity. RNA-directed RNA polymerase that catalyzes the transcription of viral genomic and subgenomic RNAs. Functionally, catalyzes the RNA N7-guanylyltransferase reaction to methylate the core cap structure GpppN-RNA into the type-0 cap (m)GpppN-RNA. This chain is Replicase polyprotein 1ab, found in Ochlerotatus harrisoni (CAVV).